The sequence spans 494 residues: Glutamyl-tRNA(Gln) amidotransferase subunit A, mitochondrial (494 aa).

Residues Lys79 and Ser160 each act as charge relay system in the active site. The active-site Acyl-ester intermediate is the Ser184.

The protein belongs to the amidase family. GatA subfamily. As to quaternary structure, subunit of the heterotrimeric GatCAB amidotransferase (AdT) complex, composed of A, B and C subunits.

Its subcellular location is the mitochondrion. The catalysed reaction is L-glutamyl-tRNA(Gln) + L-glutamine + ATP + H2O = L-glutaminyl-tRNA(Gln) + L-glutamate + ADP + phosphate + H(+). Functionally, allows the formation of correctly charged Gln-tRNA(Gln) through the transamidation of misacylated Glu-tRNA(Gln) in the mitochondria. The reaction takes place in the presence of glutamine and ATP through an activated gamma-phospho-Glu-tRNA(Gln). The polypeptide is Glutamyl-tRNA(Gln) amidotransferase subunit A, mitochondrial (Aedes aegypti (Yellowfever mosquito)).